A 337-amino-acid chain; its full sequence is tRNA N6-adenosine threonylcarbamoyltransferase (337 aa).

2 residues coordinate Fe cation: H111 and H115. Substrate-binding positions include L134–G138, D167, G180, and N272. D300 is a binding site for Fe cation.

It belongs to the KAE1 / TsaD family. Fe(2+) serves as cofactor.

Its subcellular location is the cytoplasm. The enzyme catalyses L-threonylcarbamoyladenylate + adenosine(37) in tRNA = N(6)-L-threonylcarbamoyladenosine(37) in tRNA + AMP + H(+). In terms of biological role, required for the formation of a threonylcarbamoyl group on adenosine at position 37 (t(6)A37) in tRNAs that read codons beginning with adenine. Is involved in the transfer of the threonylcarbamoyl moiety of threonylcarbamoyl-AMP (TC-AMP) to the N6 group of A37, together with TsaE and TsaB. TsaD likely plays a direct catalytic role in this reaction. The chain is tRNA N6-adenosine threonylcarbamoyltransferase from Shewanella amazonensis (strain ATCC BAA-1098 / SB2B).